We begin with the raw amino-acid sequence, 301 residues long: Vomeronasal type-1 receptor 4 (301 aa).

Residues 1–5 (MASRY) are Extracellular-facing. Residues 6-26 (VAVGMILSQTVVGVLGSFSVL) form a helical membrane-spanning segment. The Cytoplasmic portion of the chain corresponds to 27–48 (LHYLSFYCTGCRLRSTDLIVKH). The chain crosses the membrane as a helical span at residues 49-69 (LIVANFLALRCKGVPQTMAAF). The Extracellular segment spans residues 70-88 (GVRYFLNALGCKLVFYLHR). The helical transmembrane segment at 89-109 (VGRGVSIGTTCLLSVFQVITV) threads the bilayer. Over 110 to 126 (SSRKSRWAKLKEKAPKH) the chain is Cytoplasmic. Residues 127–147 (VGFSVLLCWIVCMLVNIIFPM) traverse the membrane as a helical segment. Residues 148–185 (YVTGKWNYTNITVNEDLGYCSGGGNNKIAQTLRAMLLS) lie on the Extracellular side of the membrane. 2 N-linked (GlcNAc...) asparagine glycosylation sites follow: asparagine 154 and asparagine 157. A helical transmembrane segment spans residues 186-206 (FPDVLCLGLMLWVSSSMVCIL). Residues 207–234 (HRHKQRVQHIDRSNLSPRASPENRATQS) are Cytoplasmic-facing. Residues 235 to 255 (ILILVSTFVSSYTLSCLFQVC) form a helical membrane-spanning segment. Topologically, residues 256–264 (MALLDNPNS) are extracellular. The helical transmembrane segment at 265-285 (LLVNTSALMSVCFPTLSPFVL) threads the bilayer. The Cytoplasmic portion of the chain corresponds to 286 to 301 (MSCDPSVYRFCFAWKR).

Belongs to the G-protein coupled receptor 1 family.

It localises to the cell membrane. Its function is as follows. Putative pheromone receptor. In Homo sapiens (Human), this protein is Vomeronasal type-1 receptor 4 (VN1R4).